We begin with the raw amino-acid sequence, 390 residues long: Formamidopyrimidine-DNA glycosylase (390 aa).

The Schiff-base intermediate with DNA role is filled by Pro2. The active-site Proton donor is the Glu3. Lys60 acts as the Proton donor; for beta-elimination activity in catalysis. The DNA site is built by Tyr107, Arg126, Lys167, and Asn186. The interval 283-390 is disordered; the sequence is AEKAAKVRPA…AGKKPKGRKS (108 aa). The segment covering 301–316 has biased composition (acidic residues); it reads DDGDGEEDEQETEKED. The segment covering 321–337 has biased composition (basic residues); sequence SKKGQKPRGGRGKKPAS. Positions 343–355 are enriched in acidic residues; it reads ESDDDGDDSEAEE. Over residues 360-370 the composition is skewed to basic residues; it reads PKGRGTKPAIK.

The protein belongs to the FPG family. In terms of assembly, monomer. As to expression, expressed in leaves (at protein levels).

The protein resides in the nucleus. It carries out the reaction Hydrolysis of DNA containing ring-opened 7-methylguanine residues, releasing 2,6-diamino-4-hydroxy-5-(N-methyl)formamidopyrimidine.. It catalyses the reaction 2'-deoxyribonucleotide-(2'-deoxyribose 5'-phosphate)-2'-deoxyribonucleotide-DNA = a 3'-end 2'-deoxyribonucleotide-(2,3-dehydro-2,3-deoxyribose 5'-phosphate)-DNA + a 5'-end 5'-phospho-2'-deoxyribonucleoside-DNA + H(+). Its function is as follows. Involved in base excision repair of DNA damaged by oxidation or by mutagenic agents. Acts as a DNA glycosylase that recognizes and removes damaged bases. Can process efficiently 4,6-diamino-5-formamidopyrimidine (FapyA), 2,6-diamino-4- hydroxy-5-formamidopyrimidine (FapyG) and the further oxidation products of 8-oxoguanine (8-oxoG), such as guanidinohydantoin and spiroiminodihydantoin. Has marginal activity towards 8-oxoG. Has AP (apurinic/apyrimidinic) lyase activity. Cleaves the DNA backbone by beta-delta elimination to generate a single-strand break at the site of the removed base with both 3'- and 5'-phosphates. In Arabidopsis thaliana (Mouse-ear cress), this protein is Formamidopyrimidine-DNA glycosylase (FPG1).